The following is a 97-amino-acid chain: YcgL domain-containing protein PMI1171 (97 aa).

Residues 3–87 (MICAIYRSTK…PVESMLNAYL (85 aa)) form the YcgL domain.

In Proteus mirabilis (strain HI4320), this protein is YcgL domain-containing protein PMI1171.